A 378-amino-acid polypeptide reads, in one-letter code: MTNAIDKKVNLLDLNREGIKEFFREMGEKPFRAEQVMKWLYHFCVDDFDEMTNLNKALREKLKQVAEIRAPEVREQQQSSDGTIKFAMTLFDGQDVETVWIPEGDRATLCVSSQVGCALECTFCSTGAQGFNRNLSVAEIIGQVWRVNQLLGAYGKTGIKPVTNVVMMGMGEPLLNLNNVVPAMELMLDDLGFGLSKRRVTLSTSGVVPALEKLRERIDVMLAISLHAPDDELRNEIVPINKKYNIEEFLASSRRYVEQSKAQRKVTVEYVMLDHVNDSTDQAHALAKTLKDTPSKINLIPFNPFPGSDYGRSSNSRIDRFAKVLMEYGLTVMVRKTRGDDIDAACGQLVGDVIDRTKRILKRQQKQRGGEAIAVKTT.

E97 serves as the catalytic Proton acceptor. Positions 103-341 (EGDRATLCVS…VMVRKTRGDD (239 aa)) constitute a Radical SAM core domain. C110 and C346 are oxidised to a cystine. Positions 117, 121, and 124 each coordinate [4Fe-4S] cluster. Residues 171 to 172 (GE), S203, 225 to 227 (SLH), and N303 contribute to the S-adenosyl-L-methionine site. Residue C346 is the S-methylcysteine intermediate of the active site.

It belongs to the radical SAM superfamily. RlmN family. [4Fe-4S] cluster serves as cofactor.

It is found in the cytoplasm. The catalysed reaction is adenosine(2503) in 23S rRNA + 2 reduced [2Fe-2S]-[ferredoxin] + 2 S-adenosyl-L-methionine = 2-methyladenosine(2503) in 23S rRNA + 5'-deoxyadenosine + L-methionine + 2 oxidized [2Fe-2S]-[ferredoxin] + S-adenosyl-L-homocysteine. It catalyses the reaction adenosine(37) in tRNA + 2 reduced [2Fe-2S]-[ferredoxin] + 2 S-adenosyl-L-methionine = 2-methyladenosine(37) in tRNA + 5'-deoxyadenosine + L-methionine + 2 oxidized [2Fe-2S]-[ferredoxin] + S-adenosyl-L-homocysteine. Specifically methylates position 2 of adenine 2503 in 23S rRNA and position 2 of adenine 37 in tRNAs. m2A2503 modification seems to play a crucial role in the proofreading step occurring at the peptidyl transferase center and thus would serve to optimize ribosomal fidelity. The sequence is that of Dual-specificity RNA methyltransferase RlmN from Idiomarina loihiensis (strain ATCC BAA-735 / DSM 15497 / L2-TR).